Reading from the N-terminus, the 336-residue chain is G-protein coupled receptor homolog FPV027 (336 aa).

The Extracellular portion of the chain corresponds to 1-31; that stretch reads MSMNNITSKMNQDSYGYFQLHMSDFTRVSLS. The N-linked (GlcNAc...) asparagine; by host glycan is linked to N5. A helical transmembrane segment spans residues 32 to 52; the sequence is IVFTLVFLVGIIGNAVIIWFI. The Cytoplasmic segment spans residues 53 to 63; that stretch reads GFKWTKTISTL. The chain crosses the membrane as a helical span at residues 64–84; that stretch reads LFINLALADSLFLIFIPVYTV. The Extracellular portion of the chain corresponds to 85 to 101; sequence YVLSNFHWYLGEFLCRV. A disulfide bond links C99 and C178. A helical transmembrane segment spans residues 102–122; that stretch reads SSFFFTTNMYASMFLLTFISI. At 123–143 the chain is on the cytoplasmic side; the sequence is DKYLTLTSHRLVYKYRKYRNY. Residues 144–164 form a helical membrane-spanning segment; it reads YVCIGAIWCISIALGVPTLYY. Residues 165–200 lie on the Extracellular side of the membrane; that stretch reads KRVILSSSRNETRCISYYGDDKHTAITIYRIIVCIR. The N-linked (GlcNAc...) asparagine; by host glycan is linked to N174. Residues 201–221 form a helical membrane-spanning segment; the sequence is FIIGYVFPMTVILLSYALIVY. Topologically, residues 222–240 are cytoplasmic; the sequence is KVKFINKPPNRSFMITTAS. A helical membrane pass occupies residues 241–261; that stretch reads IFVFLACWTPHHVLNIISLYG. Over 262–276 the chain is Extracellular; the sequence is LKSTSMYNYIKESIP. Residues 277–297 traverse the membrane as a helical segment; sequence FVNAIAFVYSAINPIIYIFVI. The Cytoplasmic segment spans residues 298–336; it reads RLTSTYDSDTMDELRSALLDEETTSTEDCSDIEISDISR.

The protein belongs to the G-protein coupled receptor 1 family.

The protein resides in the host cell membrane. The polypeptide is G-protein coupled receptor homolog FPV027 (Vertebrata (FPV)).